The sequence spans 404 residues: Serine palmitoyltransferase (404 aa).

Pyridoxal 5'-phosphate is bound by residues 112–113 (GY), Ser185, His213, and Thr241. N6-(pyridoxal phosphate)lysine is present on Lys244.

The protein belongs to the class-II pyridoxal-phosphate-dependent aminotransferase family. Pyridoxal 5'-phosphate is required as a cofactor.

It is found in the cytoplasm. It carries out the reaction L-serine + hexadecanoyl-CoA + H(+) = 3-oxosphinganine + CO2 + CoA. The protein operates within lipid metabolism; sphingolipid metabolism. Involved in de novo bacterial ceramide synthesis. Catalyzes the condensation of L-serine with palmitoyl-CoA (hexadecanoyl-CoA) to produce 3-oxosphinganine. Can also condense serine and C16:1-CoA, but shows a preference for palmitoyl-CoA. In Caulobacter vibrioides (strain NA1000 / CB15N) (Caulobacter crescentus), this protein is Serine palmitoyltransferase.